The sequence spans 143 residues: Nucleoside diphosphate kinase (143 aa).

One can recognise an NDPK-like domain in the interval methionine 1–glutamine 132. The ADP site is built by lysine 3, phenylalanine 51, arginine 79, threonine 85, arginine 96, valine 103, and asparagine 106. The ATP site is built by lysine 3, phenylalanine 51, arginine 79, threonine 85, and arginine 96. Asparagine 106 contacts ATP. The Pros-phosphohistidine intermediate role is filled by histidine 109.

It belongs to the NDK family. As to quaternary structure, homohexamer. Mg(2+) is required as a cofactor.

It catalyses the reaction a 2'-deoxyribonucleoside 5'-diphosphate + ATP = a 2'-deoxyribonucleoside 5'-triphosphate + ADP. The enzyme catalyses a ribonucleoside 5'-diphosphate + ATP = a ribonucleoside 5'-triphosphate + ADP. The catalysed reaction is GDP + ATP = GTP + ADP. It participates in purine metabolism; purine nucleotide biosynthesis. In terms of biological role, major role in the synthesis of nucleoside triphosphates other than ATP. The ATP gamma phosphate is transferred to the NDP beta phosphate via a ping-pong mechanism, using a phosphorylated active-site intermediate. The chain is Nucleoside diphosphate kinase from Schistosoma mansoni (Blood fluke).